The primary structure comprises 125 residues: Large ribosomal subunit protein eL31 (125 aa).

It belongs to the eukaryotic ribosomal protein eL31 family. Component of the large ribosomal subunit.

Its subcellular location is the cytoplasm. In terms of biological role, component of the large ribosomal subunit. The ribosome is a large ribonucleoprotein complex responsible for the synthesis of proteins in the cell. The sequence is that of Large ribosomal subunit protein eL31 (rpl31) from Xenopus laevis (African clawed frog).